We begin with the raw amino-acid sequence, 108 residues long: Iron-sulfur cluster assembly protein CyaY (108 aa).

Belongs to the frataxin family.

Its function is as follows. Involved in iron-sulfur (Fe-S) cluster assembly. May act as a regulator of Fe-S biogenesis. This Burkholderia mallei (strain NCTC 10247) protein is Iron-sulfur cluster assembly protein CyaY.